The chain runs to 522 residues: Protein nucleotidyltransferase YdiU (522 aa).

Positions 109, 111, 112, 132, 144, 145, 195, and 202 each coordinate ATP. D271 acts as the Proton acceptor in catalysis. Positions 272 and 281 each coordinate Mg(2+). D281 serves as a coordination point for ATP.

This sequence belongs to the SELO family. Requires Mg(2+) as cofactor. Mn(2+) serves as cofactor.

The enzyme catalyses L-seryl-[protein] + ATP = 3-O-(5'-adenylyl)-L-seryl-[protein] + diphosphate. The catalysed reaction is L-threonyl-[protein] + ATP = 3-O-(5'-adenylyl)-L-threonyl-[protein] + diphosphate. It catalyses the reaction L-tyrosyl-[protein] + ATP = O-(5'-adenylyl)-L-tyrosyl-[protein] + diphosphate. It carries out the reaction L-histidyl-[protein] + UTP = N(tele)-(5'-uridylyl)-L-histidyl-[protein] + diphosphate. The enzyme catalyses L-seryl-[protein] + UTP = O-(5'-uridylyl)-L-seryl-[protein] + diphosphate. The catalysed reaction is L-tyrosyl-[protein] + UTP = O-(5'-uridylyl)-L-tyrosyl-[protein] + diphosphate. Nucleotidyltransferase involved in the post-translational modification of proteins. It can catalyze the addition of adenosine monophosphate (AMP) or uridine monophosphate (UMP) to a protein, resulting in modifications known as AMPylation and UMPylation. The protein is Protein nucleotidyltransferase YdiU of Burkholderia ambifaria (strain MC40-6).